A 200-amino-acid chain; its full sequence is 3-isopropylmalate dehydratase small subunit (200 aa).

Belongs to the LeuD family. LeuD type 1 subfamily. In terms of assembly, heterodimer of LeuC and LeuD.

The catalysed reaction is (2R,3S)-3-isopropylmalate = (2S)-2-isopropylmalate. It participates in amino-acid biosynthesis; L-leucine biosynthesis; L-leucine from 3-methyl-2-oxobutanoate: step 2/4. Catalyzes the isomerization between 2-isopropylmalate and 3-isopropylmalate, via the formation of 2-isopropylmaleate. This Actinobacillus succinogenes (strain ATCC 55618 / DSM 22257 / CCUG 43843 / 130Z) protein is 3-isopropylmalate dehydratase small subunit.